Consider the following 331-residue polypeptide: Hyaluronidase B (331 aa).

Disulfide bonds link cysteine 19/cysteine 308 and cysteine 185/cysteine 197. Asparagine 79 carries N-linked (GlcNAc...) asparagine glycosylation. Glutamate 109 functions as the Proton donor in the catalytic mechanism.

This sequence belongs to the glycosyl hydrolase 56 family. In terms of tissue distribution, expressed by the venom gland.

The protein resides in the secreted. The catalysed reaction is Random hydrolysis of (1-&gt;4)-linkages between N-acetyl-beta-D-glucosamine and D-glucuronate residues in hyaluronate.. Hydrolyzes high molecular weight hyaluronic acid to produce small oligosaccharides. The protein is Hyaluronidase B of Vespa velutina (Asian yellow-legged hornet).